Reading from the N-terminus, the 272-residue chain is Phosphatidylglycerol--prolipoprotein diacylglyceryl transferase (272 aa).

7 consecutive transmembrane segments (helical) span residues 17-37, 55-75, 90-110, 125-145, 174-194, 202-222, and 230-250; these read LQVH…WGLA, LVFY…VLFY, VWTG…AMLF, FIAP…FIGG, PSQI…LWWF, MAVS…MEFF, and GFIL…MLLI. An a 1,2-diacyl-sn-glycero-3-phospho-(1'-sn-glycerol)-binding site is contributed by Arg138.

The protein belongs to the Lgt family.

Its subcellular location is the cell inner membrane. The enzyme catalyses L-cysteinyl-[prolipoprotein] + a 1,2-diacyl-sn-glycero-3-phospho-(1'-sn-glycerol) = an S-1,2-diacyl-sn-glyceryl-L-cysteinyl-[prolipoprotein] + sn-glycerol 1-phosphate + H(+). It participates in protein modification; lipoprotein biosynthesis (diacylglyceryl transfer). Functionally, catalyzes the transfer of the diacylglyceryl group from phosphatidylglycerol to the sulfhydryl group of the N-terminal cysteine of a prolipoprotein, the first step in the formation of mature lipoproteins. The polypeptide is Phosphatidylglycerol--prolipoprotein diacylglyceryl transferase (Acinetobacter baumannii (strain SDF)).